Reading from the N-terminus, the 251-residue chain is Guanine nucleotide-binding protein subunit gamma 3 (251 aa).

Over residues 1–10 (MSAPSGGGEG) the composition is skewed to gly residues. The tract at residues 1–44 (MSAPSGGGEGGGKESAAGGVSSSSLAPSSLPPPRPKSPPEYPDL) is disordered. Over residues 14–28 (ESAAGGVSSSSLAPS) the composition is skewed to low complexity. Over residues 29–41 (SLPPPRPKSPPEY) the composition is skewed to pro residues. A G protein gamma domain is found at 46–126 (GKRREAARVQ…LSLVSFCCCC (81 aa)). A Cysteine methyl ester modification is found at cysteine 248. Cysteine 248 carries the S-farnesyl cysteine lipid modification. A propeptide spans 249–251 (LAF) (removed in mature form).

In terms of assembly, g proteins are composed of 3 units, alpha, beta and gamma. Expressed in flowers and siliques.

In terms of biological role, guanine nucleotide-binding proteins (G proteins) are involved as a modulator or transducer in various transmembrane signaling systems. The beta and gamma chains are required for the GTPase activity, for replacement of GDP by GTP, and for G protein-effector interaction. This Arabidopsis thaliana (Mouse-ear cress) protein is Guanine nucleotide-binding protein subunit gamma 3 (GG3).